The following is a 122-amino-acid chain: Large ribosomal subunit protein uL14 (122 aa).

This sequence belongs to the universal ribosomal protein uL14 family. Part of the 50S ribosomal subunit. Forms a cluster with proteins L3 and L19. In the 70S ribosome, L14 and L19 interact and together make contacts with the 16S rRNA in bridges B5 and B8.

In terms of biological role, binds to 23S rRNA. Forms part of two intersubunit bridges in the 70S ribosome. The polypeptide is Large ribosomal subunit protein uL14 (Symbiobacterium thermophilum (strain DSM 24528 / JCM 14929 / IAM 14863 / T)).